The chain runs to 63 residues: MKAKELREKSVEELNTELLNLLREQFNLRMQAASGQLQQSHLLKQVRRNIARVKTLLTEKAGA.

Belongs to the universal ribosomal protein uL29 family.

This Proteus mirabilis (strain HI4320) protein is Large ribosomal subunit protein uL29.